A 534-amino-acid chain; its full sequence is ATP synthase subunit beta 2 (534 aa).

The segment covering 1 to 10 has biased composition (polar residues); it reads MADPQATNGT. The segment at 1-30 is disordered; that stretch reads MADPQATNGTGAACAERDASDVGDVSDVGD. Residue 185–192 coordinates ATP; that stretch reads GGAGVGKT. Positions 494 to 505 are enriched in basic and acidic residues; it reads AAAREADARREA. The disordered stretch occupies residues 494–534; the sequence is AAAREADARREAAAAASGAGPGTTSDPASGSAEPQGARHGR.

This sequence belongs to the ATPase alpha/beta chains family. As to quaternary structure, F-type ATPases have 2 components, CF(1) - the catalytic core - and CF(0) - the membrane proton channel. CF(1) has five subunits: alpha(3), beta(3), gamma(1), delta(1), epsilon(1). CF(0) has three main subunits: a(1), b(2) and c(9-12). The alpha and beta chains form an alternating ring which encloses part of the gamma chain. CF(1) is attached to CF(0) by a central stalk formed by the gamma and epsilon chains, while a peripheral stalk is formed by the delta and b chains.

Its subcellular location is the cell inner membrane. It catalyses the reaction ATP + H2O + 4 H(+)(in) = ADP + phosphate + 5 H(+)(out). In terms of biological role, produces ATP from ADP in the presence of a proton gradient across the membrane. The catalytic sites are hosted primarily by the beta subunits. This Burkholderia pseudomallei (strain 668) protein is ATP synthase subunit beta 2.